The sequence spans 255 residues: Glutamate racemase (255 aa).

Substrate contacts are provided by residues Asp7–Ser8 and Tyr39–Gly40. The active-site Proton donor/acceptor is the Cys70. Asn71 to Thr72 lines the substrate pocket. Cys181 serves as the catalytic Proton donor/acceptor. A substrate-binding site is contributed by Thr182–His183.

Belongs to the aspartate/glutamate racemases family.

The catalysed reaction is L-glutamate = D-glutamate. It functions in the pathway cell wall biogenesis; peptidoglycan biosynthesis. In terms of biological role, provides the (R)-glutamate required for cell wall biosynthesis. The polypeptide is Glutamate racemase (Helicobacter pylori (strain Shi470)).